The chain runs to 572 residues: Flagellin A (572 aa).

Belongs to the bacterial flagellin family. In terms of assembly, heteromer of FlaA and FlaB. Interacts with FliW.

Its subcellular location is the secreted. It localises to the bacterial flagellum. Its function is as follows. Flagellin is the subunit protein which polymerizes to form the filaments of bacterial flagella. FlaA binds to flagellar assembly factor FliW protein, preventing FliW from binding to CsrA, so that CsrA can then bind flaA mRNA and represses its translation. The sequence is that of Flagellin A (flaA) from Campylobacter jejuni subsp. jejuni serotype O:2 (strain ATCC 700819 / NCTC 11168).